The chain runs to 239 residues: Orotidine 5'-phosphate decarboxylase (239 aa).

Substrate is bound by residues D15, K37, 64–73 (DLKFHDIPNT), T126, R187, Q196, G216, and R217. The active-site Proton donor is K66.

The protein belongs to the OMP decarboxylase family. Type 1 subfamily. As to quaternary structure, homodimer.

It carries out the reaction orotidine 5'-phosphate + H(+) = UMP + CO2. It functions in the pathway pyrimidine metabolism; UMP biosynthesis via de novo pathway; UMP from orotate: step 2/2. Its function is as follows. Catalyzes the decarboxylation of orotidine 5'-monophosphate (OMP) to uridine 5'-monophosphate (UMP). The protein is Orotidine 5'-phosphate decarboxylase of Geobacter sulfurreducens (strain ATCC 51573 / DSM 12127 / PCA).